The primary structure comprises 490 residues: Dual specificity protein kinase CLK3 (490 aa).

A disordered region spans residues 1 to 138 (MHHCKRYRSP…SKRSSRSVED (138 aa)). Tyrosine 7 carries the post-translational modification Phosphotyrosine. 6 positions are modified to phosphoserine: serine 9, serine 49, serine 51, serine 67, serine 76, and serine 78. Basic and acidic residues-rich tracts occupy residues 26 to 56 (YSRE…DRLP) and 63 to 76 (ERRD…EERS). Residues 88–116 (RSRHRRRSRERGPYRTRKHAHHCHKRRTR) show a composition bias toward basic residues. A compositionally biased stretch (low complexity) spans 117 to 130 (SCSSASSRSQQSSK). Serine 135 bears the Phosphoserine mark. Residues 156-472 (YEIVGNLGEG…LAEALLHPFF (317 aa)) enclose the Protein kinase domain. Residues 162–170 (LGEGTFGKV) and lysine 186 each bind ATP. The Proton acceptor role is filled by aspartate 283.

Belongs to the protein kinase superfamily. CMGC Ser/Thr protein kinase family. Lammer subfamily. Autophosphorylates on all three types of residues. As to expression, endothelial cells.

The protein resides in the nucleus. Its subcellular location is the cytoplasm. It localises to the cytoplasmic vesicle. It is found in the secretory vesicle. The protein localises to the acrosome. The protein resides in the nucleus speckle. The catalysed reaction is L-seryl-[protein] + ATP = O-phospho-L-seryl-[protein] + ADP + H(+). The enzyme catalyses L-threonyl-[protein] + ATP = O-phospho-L-threonyl-[protein] + ADP + H(+). It carries out the reaction L-tyrosyl-[protein] + ATP = O-phospho-L-tyrosyl-[protein] + ADP + H(+). Its activity is regulated as follows. Leucettine L41 inhibits its kinase activity and affects the regulation of alternative splicing mediated by phosphorylation of SR proteins. In terms of biological role, dual specificity kinase acting on both serine/threonine and tyrosine-containing substrates. Phosphorylates serine- and arginine-rich (SR) proteins of the spliceosomal complex. May be a constituent of a network of regulatory mechanisms that enable SR proteins to control RNA splicing and can cause redistribution of SR proteins from speckles to a diffuse nucleoplasmic distribution. Phosphorylates SRSF1 and SRSF3. Regulates the alternative splicing of tissue factor (F3) pre-mRNA in endothelial cells. The chain is Dual specificity protein kinase CLK3 from Homo sapiens (Human).